The following is a 951-amino-acid chain: 5'-3' exoribonuclease 2 (951 aa).

The segment at 262-278 (PCALCNQFGHEVKDCEG) adopts a CCHC-type zinc-finger fold. Position 286 is an N6-acetyllysine (lysine 286). The disordered stretch occupies residues 408-508 (KDDEDSFRRR…SDSEPEPEDN (101 aa)). Residues 416-426 (RRQKEKRKRMK) show a composition bias toward basic residues. The residue at position 439 (threonine 439) is a Phosphothreonine. Composition is skewed to polar residues over residues 445–458 (SRNSPGCQVASNPR) and 467–485 (QRNSSPSISPNTSFASDGS). Residues serine 448, serine 471, serine 473, serine 475, serine 482, serine 487, serine 499, serine 501, and serine 678 each carry the phosphoserine modification. Asymmetric dimethylarginine; alternate is present on residues arginine 824, arginine 847, and arginine 851. Arginine 824, arginine 847, and arginine 851 each carry omega-N-methylarginine; alternate. At arginine 880 the chain carries Asymmetric dimethylarginine. Arginine 883 bears the Asymmetric dimethylarginine; alternate mark. Omega-N-methylarginine; alternate is present on arginine 883. Arginine 895 bears the Omega-N-methylarginine mark. The disordered stretch occupies residues 907–951 (NQYQMLGGPGGYPPRRDDHRGGRQGYPREGRKYPLPPPSGRYSWN). A compositionally biased stretch (basic and acidic residues) spans 920–938 (PRRDDHRGGRQGYPREGRK). Arginine 947 is modified (asymmetric dimethylarginine; alternate). Arginine 947 bears the Omega-N-methylarginine; alternate mark.

It belongs to the 5'-3' exonuclease family. XRN2/RAT1 subfamily. In terms of assembly, interacts with POLR2A and SMN1/SMN2. Interacts with CDKN2AIP and NKRF. Interacts with CDKN2AIPNL; the interaction is direct. Interacts with TRIM71 (via NHL repeats) in an RNA-dependent manner. Interacts with DHX34; the interaction is RNA-independent. As to expression, expressed in the spleen, testis, heart, brain, lung, liver, skeletal muscle, and kidney.

It is found in the nucleus. Its subcellular location is the nucleolus. In terms of biological role, possesses 5'-&gt;3' exoribonuclease activity. May promote the termination of transcription by RNA polymerase II. During transcription termination, cleavage at the polyadenylation site liberates a 5' fragment which is subsequently processed to form the mature mRNA and a 3' fragment which remains attached to the elongating polymerase. The processive degradation of this 3' fragment by this protein may promote termination of transcription. Binds to RNA polymerase II (RNAp II) transcription termination R-loops formed by G-rich pause sites. The sequence is that of 5'-3' exoribonuclease 2 (Xrn2) from Mus musculus (Mouse).